A 222-amino-acid chain; its full sequence is Protein DEHYDRATION-INDUCED 19 homolog 6 (222 aa).

Ser116 carries the post-translational modification Phosphoserine.

This sequence belongs to the Di19 family. Post-translationally, phosphorylated in vitro by CPK3 or CPK11. As to expression, expressed in seedlings, roots, leaves, stems, flowers and siliques.

Its subcellular location is the nucleus. This is Protein DEHYDRATION-INDUCED 19 homolog 6 (DI19-6) from Arabidopsis thaliana (Mouse-ear cress).